The chain runs to 134 residues: Holo-[acyl-carrier-protein] synthase (134 aa).

Mg(2+)-binding residues include Asp8 and Glu58.

It belongs to the P-Pant transferase superfamily. AcpS family. The cofactor is Mg(2+).

The protein resides in the cytoplasm. It carries out the reaction apo-[ACP] + CoA = holo-[ACP] + adenosine 3',5'-bisphosphate + H(+). In terms of biological role, transfers the 4'-phosphopantetheine moiety from coenzyme A to a Ser of acyl-carrier-protein. The polypeptide is Holo-[acyl-carrier-protein] synthase (Ruminiclostridium cellulolyticum (strain ATCC 35319 / DSM 5812 / JCM 6584 / H10) (Clostridium cellulolyticum)).